The sequence spans 234 residues: Large ribosomal subunit protein uL1 (234 aa).

Belongs to the universal ribosomal protein uL1 family. Part of the 50S ribosomal subunit.

Binds directly to 23S rRNA. The L1 stalk is quite mobile in the ribosome, and is involved in E site tRNA release. Its function is as follows. Protein L1 is also a translational repressor protein, it controls the translation of the L11 operon by binding to its mRNA. This Prochlorococcus marinus (strain SARG / CCMP1375 / SS120) protein is Large ribosomal subunit protein uL1.